Reading from the N-terminus, the 321-residue chain is Mas-related G-protein coupled receptor member H (321 aa).

Residues 1-35 are Extracellular-facing; the sequence is MEPLATTLCPQECTQTTRNETPNETTWSSEHVTKY. Residue Asn-23 is glycosylated (N-linked (GlcNAc...) asparagine). A helical transmembrane segment spans residues 36 to 56; the sequence is TYISISLVICSLGLVGNGLLI. Topologically, residues 57 to 71 are cytoplasmic; that stretch reads WFLIFCIKRKPFTIY. A helical membrane pass occupies residues 72 to 92; sequence ILHLAFADFMVLLCSSIIQLV. The Extracellular segment spans residues 93–102; sequence NTFHIYDSTL. A helical transmembrane segment spans residues 103–126; that stretch reads VSYAVLFMIFGYNTGLHLLTAISV. The Cytoplasmic segment spans residues 127 to 147; that stretch reads ERCLSVLYPIWYHCRRPKHQS. Residues 148–168 form a helical membrane-spanning segment; the sequence is TVACTLLWALSVLVSGLENFF. At 169–188 the chain is on the extracellular side; the sequence is CILEVKPQFPECRYVYIFSC. Residues 189–209 form a helical membrane-spanning segment; sequence TLTFLVFVPLMVFSNLILFIQ. Residues 210-225 lie on the Cytoplasmic side of the membrane; it reads VCCNLKPRQPAKLYVI. A helical transmembrane segment spans residues 226-246; the sequence is IMATVILFLVFAMPMKVLLII. Gly-247 is a topological domain (extracellular). A helical membrane pass occupies residues 248-271; that stretch reads YYSNSTDASVWKSLPYLNMLSTIN. Residues 272-320 are Cytoplasmic-facing; sequence CSINPIVYFVVGSLRRKRSRKSLKEALQKVFEEKPVVASRENEVQFSLP.

Belongs to the G-protein coupled receptor 1 family. Mas subfamily.

It is found in the cell membrane. In terms of biological role, orphan receptor. May regulate nociceptor function and/or development, including the sensation or modulation of pain. The sequence is that of Mas-related G-protein coupled receptor member H (Mrgprh) from Rattus norvegicus (Rat).